The primary structure comprises 377 residues: Succinyl-diaminopimelate desuccinylase (377 aa).

His-66 contributes to the Zn(2+) binding site. The active site involves Asp-68. Asp-99 serves as a coordination point for Zn(2+). Glu-133 acts as the Proton acceptor in catalysis. Zn(2+) contacts are provided by Glu-134, Glu-162, and His-348.

The protein belongs to the peptidase M20A family. DapE subfamily. As to quaternary structure, homodimer. The cofactor is Zn(2+). Co(2+) serves as cofactor.

It catalyses the reaction N-succinyl-(2S,6S)-2,6-diaminopimelate + H2O = (2S,6S)-2,6-diaminopimelate + succinate. It functions in the pathway amino-acid biosynthesis; L-lysine biosynthesis via DAP pathway; LL-2,6-diaminopimelate from (S)-tetrahydrodipicolinate (succinylase route): step 3/3. Its function is as follows. Catalyzes the hydrolysis of N-succinyl-L,L-diaminopimelic acid (SDAP), forming succinate and LL-2,6-diaminopimelate (DAP), an intermediate involved in the bacterial biosynthesis of lysine and meso-diaminopimelic acid, an essential component of bacterial cell walls. This chain is Succinyl-diaminopimelate desuccinylase, found in Histophilus somni (strain 129Pt) (Haemophilus somnus).